The chain runs to 390 residues: Enoyl-[acyl-carrier-protein] reductase [NADH], chloroplastic (390 aa).

The transit peptide at 1 to 74 (MAATAASSLQ…CKRPFSFSTR (74 aa)) directs the protein to the chloroplast. 2 residues coordinate NADP(+): Leu53 and Asn170. Ser239 serves as the catalytic Proton donor. 2 residues coordinate NADP(+): Lys282 and Ser314. Lys282 acts as the Lowers pKa of active site Tyr in catalysis.

This sequence belongs to the short-chain dehydrogenases/reductases (SDR) family. FabI subfamily. Homotetramer. As to expression, expressed in flowers and siliques and at lower levels in roots and leaves (at protein level).

It localises to the plastid. The protein localises to the chloroplast. The enzyme catalyses a 2,3-saturated acyl-[ACP] + NAD(+) = a (2E)-enoyl-[ACP] + NADH + H(+). Its pathway is lipid metabolism; fatty acid biosynthesis. With respect to regulation, inhibited by the phytotoxin cyperin and the synthetic antimicrobial compound triclosan. Functionally, catalyzes the NAD-dependent reduction of a carbon-carbon double bond in an enoyl moiety that is covalently linked to an acyl carrier protein (ACP). Catalyzes the last reduction step in the de novo synthesis cycle of fatty acids. Involved in the elongation cycle of fatty acids which are used in lipid metabolism. Required for normal plant growth. The chain is Enoyl-[acyl-carrier-protein] reductase [NADH], chloroplastic (MOD1) from Arabidopsis thaliana (Mouse-ear cress).